We begin with the raw amino-acid sequence, 506 residues long: ATP synthase subunit alpha, chloroplastic (506 aa).

170–177 (GDRQTGKT) is an ATP binding site. Threonine 257 is modified (phosphothreonine).

Belongs to the ATPase alpha/beta chains family. F-type ATPases have 2 components, CF(1) - the catalytic core - and CF(0) - the membrane proton channel. CF(1) has five subunits: alpha(3), beta(3), gamma(1), delta(1), epsilon(1). CF(0) has four main subunits: a, b, b' and c.

The protein localises to the plastid. Its subcellular location is the chloroplast thylakoid membrane. It catalyses the reaction ATP + H2O + 4 H(+)(in) = ADP + phosphate + 5 H(+)(out). Produces ATP from ADP in the presence of a proton gradient across the membrane. The alpha chain is a regulatory subunit. This chain is ATP synthase subunit alpha, chloroplastic, found in Olimarabidopsis pumila (Dwarf rocket).